The primary structure comprises 166 residues: Small ribosomal subunit protein uS5 (166 aa).

Residues 11 to 74 enclose the S5 DRBM domain; it reads LQEKLIAVNR…EKARRNMINV (64 aa).

Belongs to the universal ribosomal protein uS5 family. Part of the 30S ribosomal subunit. Contacts proteins S4 and S8.

In terms of biological role, with S4 and S12 plays an important role in translational accuracy. Functionally, located at the back of the 30S subunit body where it stabilizes the conformation of the head with respect to the body. The sequence is that of Small ribosomal subunit protein uS5 from Haemophilus influenzae (strain 86-028NP).